A 90-amino-acid polypeptide reads, in one-letter code: Acylphosphatase (90 aa).

In terms of domain architecture, Acylphosphatase-like spans 3–90 (AVHMNASGQV…FEGQDFIVKY (88 aa)). Catalysis depends on residues R18 and N36.

It belongs to the acylphosphatase family.

It carries out the reaction an acyl phosphate + H2O = a carboxylate + phosphate + H(+). In Pediococcus pentosaceus (strain ATCC 25745 / CCUG 21536 / LMG 10740 / 183-1w), this protein is Acylphosphatase (acyP).